The chain runs to 155 residues: Zinc finger HIT domain-containing protein 3 (155 aa).

Zn(2+) contacts are provided by Cys-11, Cys-14, Cys-22, Cys-25, Cys-30, Cys-34, His-38, and Cys-42. The HIT-type zinc finger occupies 11-42 (CVICLEKPKYRCPACRVPYCSVVCFRKHKEQC). A Phosphoserine modification is found at Ser-80.

Thyroid receptor interacting proteins (TRIPs) specifically interact with the ligand binding domain of the thyroid receptor (TR). Requires the presence of thyroid hormone for its interaction. Interacts with NUFIP1. Interacts (via HIT-type zinc finger) with the RUVBL1/RUVBL2 complex in the presence of ADP.

It localises to the cytoplasm. The protein localises to the nucleus. This is Zinc finger HIT domain-containing protein 3 (ZNHIT3) from Homo sapiens (Human).